Consider the following 373-residue polypeptide: Dual-specificity RNA methyltransferase RlmN (373 aa).

The Proton acceptor role is filled by glutamate 94. The region spanning 100–339 (EEDRATLCVS…VIVRKTRGDD (240 aa)) is the Radical SAM core domain. The cysteines at positions 107 and 344 are disulfide-linked. [4Fe-4S] cluster contacts are provided by cysteine 114, cysteine 118, and cysteine 121. Residues 168–169 (GE), serine 200, 222–224 (SIH), and asparagine 301 contribute to the S-adenosyl-L-methionine site. Cysteine 344 functions as the S-methylcysteine intermediate in the catalytic mechanism.

This sequence belongs to the radical SAM superfamily. RlmN family. The cofactor is [4Fe-4S] cluster.

The protein localises to the cytoplasm. It carries out the reaction adenosine(2503) in 23S rRNA + 2 reduced [2Fe-2S]-[ferredoxin] + 2 S-adenosyl-L-methionine = 2-methyladenosine(2503) in 23S rRNA + 5'-deoxyadenosine + L-methionine + 2 oxidized [2Fe-2S]-[ferredoxin] + S-adenosyl-L-homocysteine. The enzyme catalyses adenosine(37) in tRNA + 2 reduced [2Fe-2S]-[ferredoxin] + 2 S-adenosyl-L-methionine = 2-methyladenosine(37) in tRNA + 5'-deoxyadenosine + L-methionine + 2 oxidized [2Fe-2S]-[ferredoxin] + S-adenosyl-L-homocysteine. Specifically methylates position 2 of adenine 2503 in 23S rRNA and position 2 of adenine 37 in tRNAs. m2A2503 modification seems to play a crucial role in the proofreading step occurring at the peptidyl transferase center and thus would serve to optimize ribosomal fidelity. This Shewanella loihica (strain ATCC BAA-1088 / PV-4) protein is Dual-specificity RNA methyltransferase RlmN.